The primary structure comprises 173 residues: Small ribosomal subunit protein uS10m (173 aa).

Belongs to the universal ribosomal protein uS10 family. In terms of assembly, component of the mitochondrial ribosome small subunit (28S) which comprises a 12S rRNA and about 30 distinct proteins.

Its subcellular location is the mitochondrion. The polypeptide is Small ribosomal subunit protein uS10m (mRpS10) (Drosophila melanogaster (Fruit fly)).